We begin with the raw amino-acid sequence, 230 residues long: PsbP-like protein 1, chloroplastic (230 aa).

It belongs to the PsbP family.

It localises to the plastid. It is found in the chloroplast thylakoid lumen. Its function is as follows. Required for efficient repair of photodamaged PSII, but not tightly associated with the complex. The sequence is that of PsbP-like protein 1, chloroplastic (PPL1) from Arabidopsis thaliana (Mouse-ear cress).